The primary structure comprises 253 residues: Troponin T, fast skeletal muscle isoforms (253 aa).

Over residues 1 to 25 the composition is skewed to acidic residues; that stretch reads MSDTEEVEHGEEEYEEEEEVQEEEV. Disordered stretches follow at residues 1 to 58 and 97 to 178; these read MSDT…DIQK and RAER…VLAE. Residue S2 is modified to N-acetylserine. Basic and acidic residues-rich tracts occupy residues 46 to 58, 97 to 139, and 167 to 178; these read PEGE…DIQK, RAER…DDLK, and TARETKKKVLAE.

This sequence belongs to the troponin T family.

Its function is as follows. Troponin T is the tropomyosin-binding subunit of troponin, the thin filament regulatory complex which confers calcium-sensitivity to striated muscle actomyosin ATPase activity. The polypeptide is Troponin T, fast skeletal muscle isoforms (TNNT3) (Coturnix japonica (Japanese quail)).